An 891-amino-acid chain; its full sequence is MSGVNEIRSAFLNYFGKNGHEIVASSPLVPRNDPTLMFTNAGMVQFKNVFTGVEKRANPRAVSSQKCVRAGGKHNDLDNVGYTARHHTFFEMLGNFSFGDYFKDHAIELAWNLITKEYGLAKDRLLVTVFSEDDEAFGLWKKIAGLPDSKIIRIPTSDNFWQMGDTGPCGPCSEIFFDHGDHIFGGPPGSPEEDGDRFIEIWNLVFMQFDQVAPGSRNPLPKPSIDTGMGLERIAAVLQGKHDNYEIDLFQALIRAIADLTGADPQGEQKASLRVIADHLRASSFLIADGVLPSNEGRGYVLRRIMRRAMRHGQLLGAREPLMWRLVWALVREMGQAYPELVRAENLIEETLRLEETRFRKTLERGLGILDEKSNTLKQGDMFDGETAFTLYDTYGFPLDLTQDALRARGISVDIASFTDAMDRQRALARASWTGSGDTAAETVWFGLREKLGATEFLGYETETAEAEVAALVKDGQVVDQLKTGDSGAIVLNQTPFYAESGGQVGDTGVLSADGVRFRVTETQKKAGDLFVHLGTVEEGTIKLATALALNVDHDRRGAIRANHSATHLLHEALRQVLGDHIAQKGSLVAPDRLRFDFMHPKPISAEELRRVEDIANEVVLENDEVTTRLMAVDDARDAGARALFGEKYGDEVRVVVMGKGSRDRGANALGWSVELCGGTHVKRTGDIGLISVTGESAVASGVRRIEALTGRQARQSANAAIATAKQAAAELRTSVDDMPARIAALMDERKKLERELAEARKKLAMGGGGAAGAANGASDVREVGGVKLMARAVEGVEIKDLKSLVDQGKKQLGSGVIALIATSEDGKGSIVVGVTPDLVARFSAVDLVRKASEVLGGKGGGGKPDMAQAGGPDGAKAQQALDAIAAAIAG.

The Zn(2+) site is built by histidine 564, histidine 568, cysteine 677, and histidine 681.

It belongs to the class-II aminoacyl-tRNA synthetase family. Requires Zn(2+) as cofactor.

Its subcellular location is the cytoplasm. The enzyme catalyses tRNA(Ala) + L-alanine + ATP = L-alanyl-tRNA(Ala) + AMP + diphosphate. Its function is as follows. Catalyzes the attachment of alanine to tRNA(Ala) in a two-step reaction: alanine is first activated by ATP to form Ala-AMP and then transferred to the acceptor end of tRNA(Ala). Also edits incorrectly charged Ser-tRNA(Ala) and Gly-tRNA(Ala) via its editing domain. This is Alanine--tRNA ligase from Rhodopseudomonas palustris (strain BisA53).